Consider the following 319-residue polypeptide: ATP-dependent 6-phosphofructokinase (319 aa).

Gly11 contacts ATP. Position 21–25 (21–25 (RAVVR)) interacts with ADP. ATP-binding positions include 72–73 (RC) and 102–105 (GDGS). Position 103 (Asp103) interacts with Mg(2+). Substrate is bound at residue 125 to 127 (TID). The Proton acceptor role is filled by Asp127. Arg154 lines the ADP pocket. Substrate contacts are provided by residues Arg162 and 169–171 (MGR). ADP contacts are provided by residues 185-187 (GAE), Arg211, and 213-215 (KKH). Substrate-binding positions include Glu222, Arg243, and 249-252 (HIQR).

It belongs to the phosphofructokinase type A (PFKA) family. ATP-dependent PFK group I subfamily. Prokaryotic clade 'B1' sub-subfamily. As to quaternary structure, homotetramer. It depends on Mg(2+) as a cofactor.

It is found in the cytoplasm. It catalyses the reaction beta-D-fructose 6-phosphate + ATP = beta-D-fructose 1,6-bisphosphate + ADP + H(+). Its pathway is carbohydrate degradation; glycolysis; D-glyceraldehyde 3-phosphate and glycerone phosphate from D-glucose: step 3/4. With respect to regulation, allosterically activated by ADP and other diphosphonucleosides, and allosterically inhibited by phosphoenolpyruvate. Catalyzes the phosphorylation of D-fructose 6-phosphate to fructose 1,6-bisphosphate by ATP, the first committing step of glycolysis. The chain is ATP-dependent 6-phosphofructokinase from Shouchella clausii (strain KSM-K16) (Alkalihalobacillus clausii).